The chain runs to 569 residues: Formate hydrogenlyase subunit 5 (569 aa).

Residues 538–569 (MTVVDVRKKKSKVVPYKELERYSIERKNSPLK) constitute a propeptide that is removed on maturation.

The protein belongs to the complex I 49 kDa subunit family. In terms of assembly, FHL comprises of a formate dehydrogenase, unidentified electron carriers and a hydrogenase (isoenzyme 3). In this non-energy conserving pathway molecular hydrogen and carbodioxide from formate are released. It depends on [4Fe-4S] cluster as a cofactor. Ni(2+) serves as cofactor.

This chain is Formate hydrogenlyase subunit 5 (hycE), found in Escherichia coli (strain K12).